Consider the following 119-residue polypeptide: Large ribosomal subunit protein bL19 (119 aa).

This sequence belongs to the bacterial ribosomal protein bL19 family.

This protein is located at the 30S-50S ribosomal subunit interface and may play a role in the structure and function of the aminoacyl-tRNA binding site. The chain is Large ribosomal subunit protein bL19 from Arthrobacter sp. (strain FB24).